A 131-amino-acid polypeptide reads, in one-letter code: NADH-quinone oxidoreductase subunit I 2 (131 aa).

4Fe-4S ferredoxin-type domains are found at residues 42–71 (LKVSHSKAKCVCCYLCPTVCPAKCITVEAG) and 81–110 (ERYEIDMLRCIFCGYCVEACPVDALKMTGE). Residues Cys-51, Cys-54, Cys-57, Cys-61, Cys-90, Cys-93, Cys-96, and Cys-100 each contribute to the [4Fe-4S] cluster site.

It belongs to the complex I 23 kDa subunit family. As to quaternary structure, NDH-1 is composed of 14 different subunits. Subunits NuoA, H, J, K, L, M, N constitute the membrane sector of the complex. Requires [4Fe-4S] cluster as cofactor.

It localises to the cell inner membrane. The enzyme catalyses a quinone + NADH + 5 H(+)(in) = a quinol + NAD(+) + 4 H(+)(out). NDH-1 shuttles electrons from NADH, via FMN and iron-sulfur (Fe-S) centers, to quinones in the respiratory chain. The immediate electron acceptor for the enzyme in this species is believed to be ubiquinone. Couples the redox reaction to proton translocation (for every two electrons transferred, four hydrogen ions are translocated across the cytoplasmic membrane), and thus conserves the redox energy in a proton gradient. This is NADH-quinone oxidoreductase subunit I 2 from Geobacter metallireducens (strain ATCC 53774 / DSM 7210 / GS-15).